The chain runs to 1500 residues: Copper-transporting ATPase 1 (1500 aa).

At 1-653 (MDPSMGVNSV…KREIRQWRRS (653 aa)) the chain is on the cytoplasmic side. 2 consecutive HMA domains span residues 8–74 (NSVT…FDAV) and 85–151 (TDTL…LDTG). Positions 18, 19, and 22 each coordinate Cu(+). Thr-152 is subject to Phosphothreonine. The HMA 3 domain maps to 171 to 237 (VVLKMKVEGM…QIEAMGFPAF (67 aa)). Cu(+) contacts are provided by Cys-182 and Cys-185. Ser-270 carries the post-translational modification Phosphoserine. The 67-residue stretch at 277 to 343 (STATFIIDGM…AIEAVSPGLY (67 aa)) folds into the HMA 4 domain. The Cu(+) site is built by Cys-288 and Cys-291. Thr-327 carries the phosphothreonine modification. A phosphoserine mark is found at Ser-339, Ser-353, Ser-357, and Ser-362. 3 consecutive HMA domains span residues 377 to 443 (QETV…FDAT), 488 to 554 (SKCY…FGAT), and 564 to 630 (GVLE…FEAS). Positions 388, 391, 499, 502, 575, and 578 each coordinate Cu(+). The helical transmembrane segment at 654-675 (FLVSLFFCIPVMGLMIYMMVMD) threads the bilayer. Over 676 to 714 (HHFATLHHNQNMSKEEMINLHSSMFLERQILPGLSVMNL) the chain is Extracellular. Asn-686 carries an N-linked (GlcNAc...) asparagine glycan. Residues 715–734 (LSFLLCVPVQFFGGWYFYIQ) traverse the membrane as a helical segment. Residues 735–741 (AYKALKH) are Cytoplasmic-facing. The helical transmembrane segment at 742–762 (KTANMDVLIVLATTIAFAYSL) threads the bilayer. At 763–781 (IILLVAMYERAKVNPITFF) the chain is on the extracellular side. A helical membrane pass occupies residues 782–802 (DTPPMLFVFIALGRWLEHIAK). Over 803–936 (GKTSEALAKL…KAPIQQFADK (134 aa)) the chain is Cytoplasmic. The helical transmembrane segment at 937-959 (LSGYFVPFIVFVSIATLLVWIVI) threads the bilayer. The Extracellular segment spans residues 960–989 (GFLNFEIVETYFPGYNRSISRTETIIRFAF). Asn-975 carries N-linked (GlcNAc...) asparagine glycosylation. A helical membrane pass occupies residues 990–1011 (QASITVLCIACPCSLGLATPTA). The Cytoplasmic segment spans residues 1012–1356 (VMVGTGVGAQ…LSRKTVKRIR (345 aa)). Residue Asp-1044 is the 4-aspartylphosphate intermediate of the active site. Glu-1081 is an ATP binding site. At Thr-1212 the chain carries Phosphothreonine. Mg(2+) is bound by residues Asp-1301 and Asp-1305. Residues 1357–1374 (INFVFALIYNLVGIPIAA) traverse the membrane as a helical segment. The Extracellular portion of the chain corresponds to 1375-1385 (GVFMPIGLVLQ). Residues 1386 to 1405 (PWMGSAAMAASSVSVVLSSL) traverse the membrane as a helical segment. The Cytoplasmic segment spans residues 1406 to 1500 (FLKLYRKPTY…DFREDDDTAL (95 aa)). Ser-1430, Ser-1432, Ser-1460, Ser-1463, and Ser-1466 each carry phosphoserine. An Endocytosis signal motif is present at residues 1467–1468 (LL). Residues Ser-1469, Ser-1473, Ser-1476, and Ser-1486 each carry the phosphoserine modification. Residues 1486–1500 (SLLVGDFREDDDTAL) form a PDZD11-binding region. The Endocytosis signal motif lies at 1487 to 1488 (LL).

The protein belongs to the cation transport ATPase (P-type) (TC 3.A.3) family. Type IB subfamily. As to quaternary structure, monomer. Interacts with PDZD11. Interacts with ATOX1 and COMMD1. Interacts with TYRP1. Directly interacts with SOD3; this interaction is copper-dependent and is required for SOD3 activity. Widely expressed including in heart, brain, lung, muscle, kidney, pancreas, and to a lesser extent placenta. Expressed in fibroblasts, aortic smooth muscle cells, aortic endothelial cells and umbilical vein endothelial cells (at protein level). In terms of tissue distribution, expressed in cerebellum and brain cortex.

It localises to the golgi apparatus. Its subcellular location is the trans-Golgi network membrane. The protein localises to the cell membrane. The protein resides in the melanosome membrane. It is found in the early endosome membrane. It localises to the cell projection. Its subcellular location is the axon. The protein localises to the dendrite. The protein resides in the postsynaptic density. It is found in the cytoplasm. It localises to the cytosol. Its subcellular location is the endoplasmic reticulum. The enzyme catalyses Cu(+)(in) + ATP + H2O = Cu(+)(out) + ADP + phosphate + H(+). Functionally, ATP-driven copper (Cu(+)) ion pump that plays an important role in intracellular copper ion homeostasis. Within a catalytic cycle, acquires Cu(+) ion from donor protein on the cytoplasmic side of the membrane and delivers it to acceptor protein on the lumenal side. The transfer of Cu(+) ion across the membrane is coupled to ATP hydrolysis and is associated with a transient phosphorylation that shifts the pump conformation from inward-facing to outward-facing state. Under physiological conditions, at low cytosolic copper concentration, it is localized at the trans-Golgi network (TGN) where it transfers Cu(+) ions to cuproenzymes of the secretory pathway. Upon elevated cytosolic copper concentrations, it relocalizes to the plasma membrane where it is responsible for the export of excess Cu(+) ions. May play a dual role in neuron function and survival by regulating cooper efflux and neuronal transmission at the synapse as well as by supplying Cu(+) ions to enzymes such as PAM, TYR and SOD3. In the melanosomes of pigmented cells, provides copper cofactor to TYR to form an active TYR holoenzyme for melanin biosynthesis. This Homo sapiens (Human) protein is Copper-transporting ATPase 1.